The sequence spans 296 residues: Nucleotide-binding protein SPJ_1472 (296 aa).

Residue 13–20 (GMSGAGKT) participates in ATP binding. 63-66 (DMRS) is a GTP binding site.

This sequence belongs to the RapZ-like family.

In terms of biological role, displays ATPase and GTPase activities. This Streptococcus pneumoniae (strain JJA) protein is Nucleotide-binding protein SPJ_1472.